Here is a 122-residue protein sequence, read N- to C-terminus: Small ribosomal subunit protein uS13 (122 aa).

Positions 95-116 are enriched in basic residues; that stretch reads GLPVRGQKTKTNARTRKGRRKT. The disordered stretch occupies residues 95-122; that stretch reads GLPVRGQKTKTNARTRKGRRKTVGAATK.

This sequence belongs to the universal ribosomal protein uS13 family. In terms of assembly, part of the 30S ribosomal subunit. Forms a loose heterodimer with protein S19. Forms two bridges to the 50S subunit in the 70S ribosome.

Functionally, located at the top of the head of the 30S subunit, it contacts several helices of the 16S rRNA. In the 70S ribosome it contacts the 23S rRNA (bridge B1a) and protein L5 of the 50S subunit (bridge B1b), connecting the 2 subunits; these bridges are implicated in subunit movement. Contacts the tRNAs in the A and P-sites. This is Small ribosomal subunit protein uS13 from Campylobacter curvus (strain 525.92).